A 487-amino-acid chain; its full sequence is N-succinylglutamate 5-semialdehyde dehydrogenase (487 aa).

The segment at 1–23 (MTHFIKGQWQAGKGHDVTSSNPA) is disordered. Residue 220–225 (GSSRTG) participates in NAD(+) binding. Residues E243 and C277 contribute to the active site.

The protein belongs to the aldehyde dehydrogenase family. AstD subfamily.

The enzyme catalyses N-succinyl-L-glutamate 5-semialdehyde + NAD(+) + H2O = N-succinyl-L-glutamate + NADH + 2 H(+). Its pathway is amino-acid degradation; L-arginine degradation via AST pathway; L-glutamate and succinate from L-arginine: step 4/5. In terms of biological role, catalyzes the NAD-dependent reduction of succinylglutamate semialdehyde into succinylglutamate. The sequence is that of N-succinylglutamate 5-semialdehyde dehydrogenase from Shewanella sp. (strain ANA-3).